A 448-amino-acid polypeptide reads, in one-letter code: Rhodopsin (448 aa).

Residues 2-33 (GRDLRDNETWWYNPSIVVHPHWREFDQVPDAV) lie on the Extracellular side of the membrane. The N-linked (GlcNAc...) asparagine glycan is linked to N8. A helical transmembrane segment spans residues 34-58 (YYSLGIFIGICGIIGCGGNGIVIYL). At 59–70 (FTKTKSLQTPAN) the chain is on the cytoplasmic side. The chain crosses the membrane as a helical span at residues 71–97 (MFIINLAFSDFTFSLVNGFPLMTISCF). Residues 98–109 (LKKWIFGFAACK) lie on the Extracellular side of the membrane. A disulfide bridge connects residues C108 and C186. A helical transmembrane segment spans residues 110-131 (VYGFIGGIFGFMSIMTMAMISI). Residues 132–151 (DRYNVIGRPMAASKKMSHRR) lie on the Cytoplasmic side of the membrane. A helical membrane pass occupies residues 152 to 172 (AFIMIIFVWLWSVLWAIGPIF). The Extracellular portion of the chain corresponds to 173 to 199 (GWGAYTLEGVLCNCSFDYISRDSTTRS). The chain crosses the membrane as a helical span at residues 200–224 (NILCMFILGFFGPILIIFFCYFNIV). At 225-261 (MSVSNHEKEMAAMAKRLNAKELRKAQAGANAEMRLAK) the chain is on the cytoplasmic side. Residues 262-283 (ISIVIVSQFLLSWSPYAVVALL) form a helical membrane-spanning segment. The Extracellular portion of the chain corresponds to 284-293 (AQFGPLEWVT). The helical transmembrane segment at 294 to 315 (PYAAQLPVMFAKASAIHNPMIY) threads the bilayer. K305 is modified (N6-(retinylidene)lysine). Residues 316 to 448 (SVSHPKFREA…QGVDNQAYQA (133 aa)) lie on the Cytoplasmic side of the membrane. Residues C336 and C337 are each lipidated (S-palmitoyl cysteine). The span at 343-352 (ETEDDKDAET) shows a compositional bias: acidic residues. The segment at 343–448 (ETEDDKDAET…QGVDNQAYQA (106 aa)) is disordered. Positions 359–391 (SSDAAPSADAAQMKEMMAMMQKMQQQQAAYPPQ) are enriched in low complexity. Over residues 392 to 437 (GYAPPPQGYPPQGYPPQGYPPQGYPPQGYPPPPQGAPPQGAPPAAP) the composition is skewed to pro residues.

The protein belongs to the G-protein coupled receptor 1 family. Opsin subfamily. In terms of processing, contains one covalently linked retinal chromophore. Upon light absorption, the covalently bound 11-cis-retinal is converted to all-trans-retinal. After hydrolysis of the Schiff base and release of the covalently bound all-trans-retinal, active rhodopsin is regenerated by binding of a fresh molecule of 11-cis-retinal. In terms of tissue distribution, retina, rhabdomere membrane of photoreceptor cells (at protein level).

The protein localises to the cell projection. It is found in the rhabdomere membrane. Functionally, photoreceptor required for image-forming vision at low light intensity. Light-induced isomerization of 11-cis to all-trans retinal triggers a conformational change that activates signaling via G-proteins. Signaling mediates the activation of phospholipase C. Subsequent receptor phosphorylation mediates displacement of the bound G-protein alpha subunit by arrestin and terminates signaling. This Todarodes pacificus (Japanese flying squid) protein is Rhodopsin (RHO).